Consider the following 445-residue polypeptide: Beclin-1 (445 aa).

The BH3 signature appears at 103 to 122; sequence TMENLSRRLKVTGDLFDIMS. Positions 137–264 form a coiled coil; it reads DTLLDQLDTQ…QLDKLKKTNV (128 aa). The segment at 240–445 is evolutionary conserved domain (ECD); it reads DDLKSVENQM…AWVSSQFYNK (206 aa). Positions 420–445 are required for membrane-association; sequence WTKALKFMLTNLKWGLAWVSSQFYNK.

Belongs to the beclin family. In terms of assembly, component of the PI3K (PI3KC3/PI3K-III/class III phosphatidylinositol 3-kinase) complex. May be proteolytically processed by caspases; the C-terminal fragment(s) may induce apoptosis.

The protein resides in the cytoplasm. Its subcellular location is the golgi apparatus. It is found in the trans-Golgi network membrane. It localises to the endosome membrane. The protein localises to the endoplasmic reticulum membrane. The protein resides in the mitochondrion membrane. Its subcellular location is the cytoplasmic vesicle. It is found in the autophagosome. In terms of biological role, plays a central role in autophagy. Acts as core subunit of different PI3K complex forms that mediate formation of phosphatidylinositol 3-phosphate and are believed to play a role in multiple membrane trafficking pathways: PI3KC3-C1 is involved in initiation of autophagosomes and PI3KC3-C2 in maturation of autophagosomes and endocytosis. Involved in regulation of degradative endocytic trafficking and required for the abscission step in cytokinesis, probably in the context of PI3KC3-C2. Essential for the formation of PI3KC3-C2 but not PI3KC3-C1 PI3K complex forms. Involved in endocytosis including endosome formation in neuronal cells. The chain is Beclin-1 (becn1) from Xenopus tropicalis (Western clawed frog).